A 196-amino-acid polypeptide reads, in one-letter code: Large ribosomal subunit protein uL5 (196 aa).

This sequence belongs to the universal ribosomal protein uL5 family. In terms of assembly, part of the 50S ribosomal subunit; part of the 5S rRNA/L5/L18/L25 subcomplex. Contacts the 5S rRNA and the P site tRNA. Forms a bridge to the 30S subunit in the 70S ribosome.

This is one of the proteins that bind and probably mediate the attachment of the 5S RNA into the large ribosomal subunit, where it forms part of the central protuberance. In the 70S ribosome it contacts protein S13 of the 30S subunit (bridge B1b), connecting the 2 subunits; this bridge is implicated in subunit movement. Contacts the P site tRNA; the 5S rRNA and some of its associated proteins might help stabilize positioning of ribosome-bound tRNAs. The chain is Large ribosomal subunit protein uL5 from Prosthecochloris aestuarii (strain DSM 271 / SK 413).